The following is a 393-amino-acid chain: Interferon regulatory factor 9 (393 aa).

The IRF tryptophan pentad repeat DNA-binding region spans 9-116 (TRKLRNWVVE…EPYKVYQLLP (108 aa)). Disordered stretches follow at residues 120-151 (VSGQ…AMQN) and 163-202 (LNNE…APFQ). Residue Ser-139 is modified to Phosphoserine.

The protein belongs to the IRF family. Interacts with STAT2 in the cytoplasm. Forms the interferon-stimulated gene factor 3 complex (ISGF3) with the heterodimer STAT1:STAT2; upon stimulation. In terms of assembly, (Microbial infection) Interacts with measles virus V protein; this interaction prevents the binding of IRF9 to STAT2 and thereby the type I interferon signaling pathway. (Microbial infection) Ubiquitinated by Herpes simplex virus 2 E3 ubiquitin ligase ICP22.

Its subcellular location is the cytoplasm. The protein localises to the nucleus. In terms of biological role, transcription factor that plays an essential role in anti-viral immunity. It mediates signaling by type I IFNs (IFN-alpha and IFN-beta). Following type I IFN binding to cell surface receptors, Jak kinases (TYK2 and JAK1) are activated, leading to tyrosine phosphorylation of STAT1 and STAT2. IRF9/ISGF3G associates with the phosphorylated STAT1:STAT2 dimer to form a complex termed ISGF3 transcription factor, that enters the nucleus. ISGF3 binds to the IFN stimulated response element (ISRE) to activate the transcription of interferon stimulated genes, which drive the cell in an antiviral state. The chain is Interferon regulatory factor 9 (IRF9) from Homo sapiens (Human).